A 156-amino-acid chain; its full sequence is Probable succinate transporter subunit YjjB (156 aa).

The next 4 helical transmembrane spans lie at 7 to 27 (WALLQDMALAAVPALGFAMVF), 54 to 74 (FGMNIEWASFLAAILIGIIGI), 86 to 106 (VFTVAAVIPMFPGISAYTAMI), and 128 to 148 (FLKASFIVGALSIGLSLPGIW).

Belongs to the ThrE exporter (TC 2.A.79) family. The transporter is composed of YjjB and YjjP.

It is found in the cell inner membrane. In terms of biological role, involved in succinate export with YjjP. Both proteins are required for export. This chain is Probable succinate transporter subunit YjjB, found in Pectobacterium carotovorum subsp. carotovorum (strain PC1).